A 490-amino-acid polypeptide reads, in one-letter code: Protein nucleotidyltransferase YdiU (490 aa).

Residues G89, G91, R92, K112, D124, G125, R175, and R182 each contribute to the ATP site. The active-site Proton acceptor is D251. 2 residues coordinate Mg(2+): N252 and D261. D261 serves as a coordination point for ATP.

It belongs to the SELO family. It depends on Mg(2+) as a cofactor. Requires Mn(2+) as cofactor.

The catalysed reaction is L-seryl-[protein] + ATP = 3-O-(5'-adenylyl)-L-seryl-[protein] + diphosphate. It carries out the reaction L-threonyl-[protein] + ATP = 3-O-(5'-adenylyl)-L-threonyl-[protein] + diphosphate. The enzyme catalyses L-tyrosyl-[protein] + ATP = O-(5'-adenylyl)-L-tyrosyl-[protein] + diphosphate. It catalyses the reaction L-histidyl-[protein] + UTP = N(tele)-(5'-uridylyl)-L-histidyl-[protein] + diphosphate. The catalysed reaction is L-seryl-[protein] + UTP = O-(5'-uridylyl)-L-seryl-[protein] + diphosphate. It carries out the reaction L-tyrosyl-[protein] + UTP = O-(5'-uridylyl)-L-tyrosyl-[protein] + diphosphate. Its function is as follows. Nucleotidyltransferase involved in the post-translational modification of proteins. It can catalyze the addition of adenosine monophosphate (AMP) or uridine monophosphate (UMP) to a protein, resulting in modifications known as AMPylation and UMPylation. This chain is Protein nucleotidyltransferase YdiU, found in Vibrio vulnificus (strain CMCP6).